The chain runs to 162 residues: ATP synthase subunit b (162 aa).

Residues 8–28 (LTGIIQLLNFLILLFVLYKFL) form a helical membrane-spanning segment.

This sequence belongs to the ATPase B chain family. In terms of assembly, F-type ATPases have 2 components, F(1) - the catalytic core - and F(0) - the membrane proton channel. F(1) has five subunits: alpha(3), beta(3), gamma(1), delta(1), epsilon(1). F(0) has three main subunits: a(1), b(2) and c(10-14). The alpha and beta chains form an alternating ring which encloses part of the gamma chain. F(1) is attached to F(0) by a central stalk formed by the gamma and epsilon chains, while a peripheral stalk is formed by the delta and b chains.

The protein resides in the cell inner membrane. Functionally, f(1)F(0) ATP synthase produces ATP from ADP in the presence of a proton or sodium gradient. F-type ATPases consist of two structural domains, F(1) containing the extramembraneous catalytic core and F(0) containing the membrane proton channel, linked together by a central stalk and a peripheral stalk. During catalysis, ATP synthesis in the catalytic domain of F(1) is coupled via a rotary mechanism of the central stalk subunits to proton translocation. Component of the F(0) channel, it forms part of the peripheral stalk, linking F(1) to F(0). The polypeptide is ATP synthase subunit b (Pseudothermotoga lettingae (strain ATCC BAA-301 / DSM 14385 / NBRC 107922 / TMO) (Thermotoga lettingae)).